We begin with the raw amino-acid sequence, 477 residues long: Pentatricopeptide repeat-containing protein At4g14170 (477 aa).

10 PPR repeats span residues 65–96 (NVVLSSKLVLAYSKLNHLFPTSLSVFWHMPYR), 97–131 (NIFSWNIIIGEFSRSGFASKSIDLFLRMWRESCVR), 133–167 (DDFTLPLILRACSASREAKSGDLIHVLCLKLGFSS), 168–198 (SLFVSSALVIMYVDMGKLLHARKLFDDMPVR), 199–233 (DSVLYTAMFGGYVQQGEAMLGLAMFREMGYSGFAL), 234–264 (DSVVMVSLLMACGQLGALKHGKSVHGWCIRR), 269–299 (GLNLGNAITDMYVKCSILDYAHTVFVNMSRR), 300–334 (DVISWSSLILGYGLDGDVVMSFKLFDEMLKEGIEP), 335–369 (NAVTFLGVLSACAHGGLVEKSWLYFRLMQEYNIVP), and 370–400 (ELKHYASVADCMSRAGLLEEAEKFLEDMPVK). The type E motif; degenerate stretch occupies residues 405-477 (VMGAVLSGCK…ISKVPGCSSI (73 aa)).

It belongs to the PPR family. PCMP-E subfamily.

The polypeptide is Pentatricopeptide repeat-containing protein At4g14170 (PCMP-E17) (Arabidopsis thaliana (Mouse-ear cress)).